Reading from the N-terminus, the 515-residue chain is MDAQTKVIIIDYGSQVTQLIARRVREAGVYSEIHPCIVTAEQVRAMKPAAIILSGGPASVGEKDAPALEKGLLDLGVPVLGICYGMQLLGQDLGGELATSETREYGPADLTLTAPCPLWDGLDLGTTSRVWMSHGDKVKTPPPGFKVVGRTATLEVAAMADEARRIYAVQFHPEVHHSEDGARIINNFLFHVAKLKADWTMSSFVERAVKEMAEVVGDRHVVCALSGGIDSTVVAVLLHKAIGKQLHCIFVDNGVLRLNEGQEVVDYLREHFDLNLKYVQAQERFLSKLHGVDDPEQKRKIIGYTFIEVFDEEAKALGHVDFLAQGTLYPDVIESVSHKGPSAVIKSHHNVGGLPEKMNLKLIEPLRELFKDEVRKVAAELGLPDFIIWRHPFPGPGLAIRVIGEITEERLDILRRADKVVQQELMSSGWYRKVWQGFAVLLPLKTVGVMGDGRTYEHVIALRIVDSVDAMTADWARLPSELLERISSRIINEVKGVNRVVYDISSKPPSTIEWE.

Residues 6–198 enclose the Glutamine amidotransferase type-1 domain; that stretch reads KVIIIDYGSQ…LFHVAKLKAD (193 aa). Cysteine 83 serves as the catalytic Nucleophile. Residues histidine 172 and glutamate 174 contribute to the active site. One can recognise a GMPS ATP-PPase domain in the interval 199 to 390; sequence WTMSSFVERA…LGLPDFIIWR (192 aa). ATP is bound at residue 226 to 232; the sequence is SGGIDST.

As to quaternary structure, homodimer.

It carries out the reaction XMP + L-glutamine + ATP + H2O = GMP + L-glutamate + AMP + diphosphate + 2 H(+). It participates in purine metabolism; GMP biosynthesis; GMP from XMP (L-Gln route): step 1/1. In terms of biological role, catalyzes the synthesis of GMP from XMP. The chain is GMP synthase [glutamine-hydrolyzing] from Nitratidesulfovibrio vulgaris (strain DP4) (Desulfovibrio vulgaris).